Reading from the N-terminus, the 501-residue chain is Glycerol kinase (501 aa).

Position 11 (Thr-11) interacts with ADP. Positions 11, 12, and 13 each coordinate ATP. Thr-11 is a binding site for sn-glycerol 3-phosphate. Position 15 (Arg-15) interacts with ADP. Positions 81, 82, 133, and 242 each coordinate sn-glycerol 3-phosphate. Arg-81, Glu-82, Tyr-133, Asp-242, and Gln-243 together coordinate glycerol. The ADP site is built by Thr-264 and Gly-307. ATP contacts are provided by Thr-264, Gly-307, Gln-311, and Gly-409. Residues Gly-409 and Asn-413 each coordinate ADP.

It belongs to the FGGY kinase family.

It catalyses the reaction glycerol + ATP = sn-glycerol 3-phosphate + ADP + H(+). It functions in the pathway polyol metabolism; glycerol degradation via glycerol kinase pathway; sn-glycerol 3-phosphate from glycerol: step 1/1. Inhibited by fructose 1,6-bisphosphate (FBP). Functionally, key enzyme in the regulation of glycerol uptake and metabolism. Catalyzes the phosphorylation of glycerol to yield sn-glycerol 3-phosphate. This is Glycerol kinase from Borreliella burgdorferi (strain ATCC 35210 / DSM 4680 / CIP 102532 / B31) (Borrelia burgdorferi).